A 600-amino-acid chain; its full sequence is Aspartate--tRNA(Asp/Asn) ligase (600 aa).

Glutamate 181 is a binding site for L-aspartate. The interval 205–208 (QQFK) is aspartate. Residue arginine 227 participates in L-aspartate binding. ATP is bound by residues 227-229 (RDE) and glutamine 236. Residue histidine 455 coordinates L-aspartate. Glutamate 489 is a binding site for ATP. Residue arginine 496 coordinates L-aspartate. 541–544 (GIDR) contacts ATP.

This sequence belongs to the class-II aminoacyl-tRNA synthetase family. Type 1 subfamily. As to quaternary structure, homodimer.

It localises to the cytoplasm. The enzyme catalyses tRNA(Asx) + L-aspartate + ATP = L-aspartyl-tRNA(Asx) + AMP + diphosphate. In terms of biological role, aspartyl-tRNA synthetase with relaxed tRNA specificity since it is able to aspartylate not only its cognate tRNA(Asp) but also tRNA(Asn). Reaction proceeds in two steps: L-aspartate is first activated by ATP to form Asp-AMP and then transferred to the acceptor end of tRNA(Asp/Asn). The chain is Aspartate--tRNA(Asp/Asn) ligase from Rubrobacter xylanophilus (strain DSM 9941 / JCM 11954 / NBRC 16129 / PRD-1).